We begin with the raw amino-acid sequence, 225 residues long: Phosphoserine phosphatase (225 aa).

Residue Met-1 is modified to N-acetylmethionine. Asp-20 acts as the Nucleophile in catalysis. The Mg(2+) site is built by Asp-20 and Asp-22. Residue 20–22 coordinates L-serine; it reads DVD. Asp-22 acts as the Proton donor in catalysis. Position 52 (Met-52) interacts with O-phospho-L-serine. Residue Gly-53 coordinates phosphate. L-serine-binding positions include 109–111 and Lys-158; that span reads SGG. Residues 109–111 and Lys-158 contribute to the O-phospho-L-serine site; that span reads SGG. Asp-179 lines the Mg(2+) pocket. Position 182 (Thr-182) interacts with O-phospho-L-serine. Residue Thr-182 coordinates phosphate.

It belongs to the HAD-like hydrolase superfamily. SerB family. In terms of assembly, homodimer. The cofactor is Mg(2+).

It localises to the cytoplasm. Its subcellular location is the cytosol. It carries out the reaction O-phospho-L-serine + H2O = L-serine + phosphate. The catalysed reaction is O-phospho-D-serine + H2O = D-serine + phosphate. It participates in amino-acid biosynthesis; L-serine biosynthesis; L-serine from 3-phospho-D-glycerate: step 3/3. Inhibited by calcium ions. Its function is as follows. Catalyzes the last irreversible step in the biosynthesis of L-serine from carbohydrates, the dephosphorylation of O-phospho-L-serine to L-serine. L-serine can then be used in protein synthesis, to produce other amino acids, in nucleotide metabolism or in glutathione synthesis, or can be racemized to D-serine, a neuromodulator. May also act on O-phospho-D-serine. This Homo sapiens (Human) protein is Phosphoserine phosphatase.